The chain runs to 214 residues: Large ribosomal subunit protein bL25 (214 aa).

Disordered regions lie at residues 1 to 23 and 182 to 214; these read MSNE…SRRL and DHDQ…ASEE. Over residues 200-214 the composition is skewed to acidic residues; that stretch reads DDDDAAEGEEAASEE.

It belongs to the bacterial ribosomal protein bL25 family. CTC subfamily. In terms of assembly, part of the 50S ribosomal subunit; part of the 5S rRNA/L5/L18/L25 subcomplex. Contacts the 5S rRNA. Binds to the 5S rRNA independently of L5 and L18.

Its function is as follows. This is one of the proteins that binds to the 5S RNA in the ribosome where it forms part of the central protuberance. In Alcanivorax borkumensis (strain ATCC 700651 / DSM 11573 / NCIMB 13689 / SK2), this protein is Large ribosomal subunit protein bL25.